A 273-amino-acid chain; its full sequence is Protein FAM210A (273 aa).

Residues 97–106 (SSSATSSGPP) are compositionally biased toward low complexity. The disordered stretch occupies residues 97-116 (SSSATSSGPPSEKKEDPDPL). The segment covering 107 to 116 (SEKKEDPDPL) has biased composition (basic and acidic residues). Residues 118 to 230 (DRSISLYQRF…GYMSTPPPVK (113 aa)) enclose the DUF1279 domain. The chain crosses the membrane as a helical span at residues 137–157 (VLIPVHLITSAVWFGTFYYAA). Residues 230 to 269 (KEYLQDKMEETKELLTEKMEETKDRLTEKLQETKGKVSLK) are a coiled coil. The segment at 247–273 (KMEETKDRLTEKLQETKGKVSLKKKVE) is disordered.

Belongs to the FAM210 family. Interacts with ATAD3A.

It is found in the membrane. The protein resides in the mitochondrion. It localises to the cytoplasm. Functionally, may play a role in the structure and strength of both muscle and bone. This is Protein FAM210A (FAM210A) from Bos taurus (Bovine).